A 764-amino-acid chain; its full sequence is Kinesin-like protein KIN-14N (764 aa).

The tract at residues 1–50 (MSTRATRPGMLHQKENAADAQAGKRQRTAAGSAARAPLSANAAPPAPDPA) is disordered. A compositionally biased stretch (low complexity) spans 29–50 (AAGSAARAPLSANAAPPAPDPA). A coiled-coil region spans residues 105 to 416 (AEIGKLNGLL…RLHNTILELK (312 aa)). The region spanning 418 to 747 (NIRVFCRVRP…LRFAARVNSC (330 aa)) is the Kinesin motor domain. 498-505 (GQTGSGKT) is a binding site for ATP.

Belongs to the TRAFAC class myosin-kinesin ATPase superfamily. Kinesin family. KIN-14 subfamily.

The sequence is that of Kinesin-like protein KIN-14N from Oryza sativa subsp. japonica (Rice).